The primary structure comprises 599 residues: Sulfite reductase [NADPH] flavoprotein alpha-component (599 aa).

The region spanning 64–202 (VTLISASQTG…AASEWRARVV (139 aa)) is the Flavodoxin-like domain. FMN is bound by residues 70 to 75 (SQTGNA), 117 to 120 (STQG), and 153 to 162 (LGDTSYEFFC). One can recognise an FAD-binding FR-type domain in the interval 234-448 (DAPLAATLSV…IEHNDNFRLP (215 aa)). FAD is bound by residues T322, A356, 386 to 389 (RLYS), 404 to 406 (TVG), Y410, and 419 to 422 (GGAS). NADP(+) is bound by residues 519–520 (SR), 525–529 (KIYVQ), and D561. An FAD-binding site is contributed by Y599.

This sequence belongs to the NADPH-dependent sulphite reductase flavoprotein subunit CysJ family. In the N-terminal section; belongs to the flavodoxin family. The protein in the C-terminal section; belongs to the flavoprotein pyridine nucleotide cytochrome reductase family. Alpha(8)-beta(8). The alpha component is a flavoprotein, the beta component is a hemoprotein. It depends on FAD as a cofactor. Requires FMN as cofactor.

It carries out the reaction hydrogen sulfide + 3 NADP(+) + 3 H2O = sulfite + 3 NADPH + 4 H(+). Its pathway is sulfur metabolism; hydrogen sulfide biosynthesis; hydrogen sulfide from sulfite (NADPH route): step 1/1. Its function is as follows. Component of the sulfite reductase complex that catalyzes the 6-electron reduction of sulfite to sulfide. This is one of several activities required for the biosynthesis of L-cysteine from sulfate. The flavoprotein component catalyzes the electron flow from NADPH -&gt; FAD -&gt; FMN to the hemoprotein component. This is Sulfite reductase [NADPH] flavoprotein alpha-component from Salmonella paratyphi B (strain ATCC BAA-1250 / SPB7).